The primary structure comprises 152 residues: D-aminoacyl-tRNA deacylase (152 aa).

Residues 137–138 (GP) carry the Gly-cisPro motif, important for rejection of L-amino acids motif.

This sequence belongs to the DTD family. In terms of assembly, homodimer.

It localises to the cytoplasm. The enzyme catalyses glycyl-tRNA(Ala) + H2O = tRNA(Ala) + glycine + H(+). It catalyses the reaction a D-aminoacyl-tRNA + H2O = a tRNA + a D-alpha-amino acid + H(+). Functionally, an aminoacyl-tRNA editing enzyme that deacylates mischarged D-aminoacyl-tRNAs. Also deacylates mischarged glycyl-tRNA(Ala), protecting cells against glycine mischarging by AlaRS. Acts via tRNA-based rather than protein-based catalysis; rejects L-amino acids rather than detecting D-amino acids in the active site. By recycling D-aminoacyl-tRNA to D-amino acids and free tRNA molecules, this enzyme counteracts the toxicity associated with the formation of D-aminoacyl-tRNA entities in vivo and helps enforce protein L-homochirality. In Geobacillus sp. (strain WCH70), this protein is D-aminoacyl-tRNA deacylase.